A 341-amino-acid polypeptide reads, in one-letter code: Putative UPF0607 protein ENSP00000381514 (341 aa).

The span at 78 to 89 shows a compositional bias: basic and acidic residues; the sequence is AEEPKEATEVKD. 2 disordered regions span residues 78–131 and 216–282; these read AEEP…NPRP and GLLT…KLPC. A compositionally biased stretch (polar residues) spans 108-127; the sequence is EAASTSRPLETQGNLTSSWY. Residues 243–252 are compositionally biased toward basic residues; it reads AGHRSRKRKL.

The protein belongs to the UPF0607 family.

In Homo sapiens (Human), this protein is Putative UPF0607 protein ENSP00000381514.